The primary structure comprises 330 residues: Biotin synthase 2 (330 aa).

The 231-residue stretch at 48–278 (MCGDGFDMCS…QAAIRLAGGR (231 aa)) folds into the Radical SAM core domain. The [4Fe-4S] cluster site is built by C66, C70, and C73. [2Fe-2S] cluster contacts are provided by S111, C143, C203, and R273.

The protein belongs to the radical SAM superfamily. Biotin synthase family. As to quaternary structure, homodimer. It depends on [4Fe-4S] cluster as a cofactor. Requires [2Fe-2S] cluster as cofactor.

The catalysed reaction is (4R,5S)-dethiobiotin + (sulfur carrier)-SH + 2 reduced [2Fe-2S]-[ferredoxin] + 2 S-adenosyl-L-methionine = (sulfur carrier)-H + biotin + 2 5'-deoxyadenosine + 2 L-methionine + 2 oxidized [2Fe-2S]-[ferredoxin]. It functions in the pathway cofactor biosynthesis; biotin biosynthesis; biotin from 7,8-diaminononanoate: step 2/2. In terms of biological role, catalyzes the conversion of dethiobiotin (DTB) to biotin by the insertion of a sulfur atom into dethiobiotin via a radical-based mechanism. The sequence is that of Biotin synthase 2 from Corynebacterium diphtheriae (strain ATCC 700971 / NCTC 13129 / Biotype gravis).